The primary structure comprises 411 residues: Translation initiation factor 2 subunit gamma (411 aa).

The tr-type G domain occupies 9–203 (QAEVNIGMVG…AIEDFIPTPK (195 aa)). A G1 region spans residues 18–25 (GHVDHGKT). Positions 21, 25, 46, and 48 each coordinate Mg(2+). GTP is bound at residue 21 to 26 (DHGKTT). A G2 region spans residues 46 to 50 (GITIK). 4 residues coordinate Zn(2+): C61, C64, C73, and C76. The G3 stretch occupies residues 90–93 (DAPG). Residues 146–149 (NKIE) and 181–183 (SAL) each bind GTP. The tract at residues 146–149 (NKIE) is G4. Positions 181–183 (SAL) are G5.

It belongs to the TRAFAC class translation factor GTPase superfamily. Classic translation factor GTPase family. EIF2G subfamily. Heterotrimer composed of an alpha, a beta and a gamma chain. Mg(2+) serves as cofactor.

It catalyses the reaction GTP + H2O = GDP + phosphate + H(+). EIF-2 functions in the early steps of protein synthesis by forming a ternary complex with GTP and initiator tRNA. The chain is Translation initiation factor 2 subunit gamma from Pyrococcus abyssi (strain GE5 / Orsay).